A 75-amino-acid chain; its full sequence is Small ribosomal subunit protein bS18 (75 aa).

Belongs to the bacterial ribosomal protein bS18 family. Part of the 30S ribosomal subunit. Forms a tight heterodimer with protein bS6.

Binds as a heterodimer with protein bS6 to the central domain of the 16S rRNA, where it helps stabilize the platform of the 30S subunit. The polypeptide is Small ribosomal subunit protein bS18 (Roseobacter denitrificans (strain ATCC 33942 / OCh 114) (Erythrobacter sp. (strain OCh 114))).